Consider the following 311-residue polypeptide: Methionyl-tRNA formyltransferase (311 aa).

Position 111 to 114 (111 to 114 (SLLP)) interacts with (6S)-5,6,7,8-tetrahydrofolate.

Belongs to the Fmt family.

It catalyses the reaction L-methionyl-tRNA(fMet) + (6R)-10-formyltetrahydrofolate = N-formyl-L-methionyl-tRNA(fMet) + (6S)-5,6,7,8-tetrahydrofolate + H(+). Attaches a formyl group to the free amino group of methionyl-tRNA(fMet). The formyl group appears to play a dual role in the initiator identity of N-formylmethionyl-tRNA by promoting its recognition by IF2 and preventing the misappropriation of this tRNA by the elongation apparatus. The chain is Methionyl-tRNA formyltransferase from Caldicellulosiruptor saccharolyticus (strain ATCC 43494 / DSM 8903 / Tp8T 6331).